A 434-amino-acid chain; its full sequence is Probable zinc metalloprotease PTRG_04772 (434 aa).

An N-linked (GlcNAc...) asparagine glycan is attached at Asn88. Residues His111, Asp131, and Glu164 each coordinate Zn(2+). Asn179 carries an N-linked (GlcNAc...) asparagine glycan. Position 191 (Asp191) interacts with Zn(2+). N-linked (GlcNAc...) asparagine glycosylation is found at Asn220, Asn299, Asn347, Asn353, Asn390, and Asn395. Residues 340-433 (SPTNVGINTT…LPFPFGCARN (94 aa)) enclose the Fibronectin type-III domain.

This sequence belongs to the peptidase M28 family. M28B subfamily. Zn(2+) serves as cofactor.

The protein localises to the secreted. The protein is Probable zinc metalloprotease PTRG_04772 of Pyrenophora tritici-repentis (strain Pt-1C-BFP) (Wheat tan spot fungus).